Here is a 462-residue protein sequence, read N- to C-terminus: Siroheme synthase (462 aa).

The segment at 1–201 (MQFLPLFHKL…GKPEEGERLL (201 aa)) is precorrin-2 dehydrogenase /sirohydrochlorin ferrochelatase. NAD(+) contacts are provided by residues 22-23 (EV) and 43-44 (PE). Serine 126 is subject to Phosphoserine. A uroporphyrinogen-III C-methyltransferase region spans residues 214–462 (GEVYLVGAGP…AWFEGAQGSL (249 aa)). Proline 223 provides a ligand contact to S-adenosyl-L-methionine. Aspartate 246 functions as the Proton acceptor in the catalytic mechanism. The active-site Proton donor is the lysine 268. S-adenosyl-L-methionine-binding positions include 299-301 (GGD), isoleucine 304, 329-330 (TA), methionine 381, and glycine 410.

It in the N-terminal section; belongs to the precorrin-2 dehydrogenase / sirohydrochlorin ferrochelatase family. In the C-terminal section; belongs to the precorrin methyltransferase family.

It carries out the reaction uroporphyrinogen III + 2 S-adenosyl-L-methionine = precorrin-2 + 2 S-adenosyl-L-homocysteine + H(+). The enzyme catalyses precorrin-2 + NAD(+) = sirohydrochlorin + NADH + 2 H(+). It catalyses the reaction siroheme + 2 H(+) = sirohydrochlorin + Fe(2+). It participates in cofactor biosynthesis; adenosylcobalamin biosynthesis; precorrin-2 from uroporphyrinogen III: step 1/1. It functions in the pathway cofactor biosynthesis; adenosylcobalamin biosynthesis; sirohydrochlorin from precorrin-2: step 1/1. Its pathway is porphyrin-containing compound metabolism; siroheme biosynthesis; precorrin-2 from uroporphyrinogen III: step 1/1. The protein operates within porphyrin-containing compound metabolism; siroheme biosynthesis; siroheme from sirohydrochlorin: step 1/1. It participates in porphyrin-containing compound metabolism; siroheme biosynthesis; sirohydrochlorin from precorrin-2: step 1/1. Its function is as follows. Multifunctional enzyme that catalyzes the SAM-dependent methylations of uroporphyrinogen III at position C-2 and C-7 to form precorrin-2 via precorrin-1. Then it catalyzes the NAD-dependent ring dehydrogenation of precorrin-2 to yield sirohydrochlorin. Finally, it catalyzes the ferrochelation of sirohydrochlorin to yield siroheme. This Ectopseudomonas mendocina (strain ymp) (Pseudomonas mendocina) protein is Siroheme synthase.